The chain runs to 1049 residues: RIMS-binding protein 2 (1049 aa).

The SH3 1 domain occupies 164 to 231 (GKVHLCVARY…PSNFVDFIQD (68 aa)). 3 Fibronectin type-III domains span residues 294–387 (VPYP…GKDV), 390–471 (APSQ…EKDE), and 486–587 (PPQD…VPPA). Disordered regions lie at residues 580–664 (PDLL…VSTT), 694–714 (SAGP…EVKR), and 728–750 (LGQQ…GSDL). Over residues 582–598 (LLVPPAPHPRTAPPPKP) the composition is skewed to pro residues. The segment covering 603–616 (MDTKDLGPHVKVDE) has biased composition (basic and acidic residues). A compositionally biased stretch (low complexity) spans 641–651 (GPGRRSPSPSR). Phosphoserine is present on residues Ser701 and Ser709. Positions 735–746 (CHGDEYHTESSR) are enriched in basic and acidic residues. Ser832 and Ser839 each carry phosphoserine. Thr841 carries the phosphothreonine modification. SH3 domains are found at residues 848–916 (LPAR…EIHA) and 952–1019 (VPTR…EVPD). The disordered stretch occupies residues 1024–1049 (HLSDAPPHYSHDPPMRTKAKRVSQPP). Residues 1040–1049 (TKAKRVSQPP) show a composition bias toward basic residues.

Belongs to the RIMBP family. As to quaternary structure, interacts with CACNA1D and CACNA1B, and potentially with other Ca(2+) channel alpha-1 isoforms. Interacts with RIMS1 and RIMS2.

The protein resides in the cell membrane. The protein localises to the synapse. Its function is as follows. Plays a role in the synaptic transmission as bifunctional linker that interacts simultaneously with RIMS1, RIMS2, CACNA1D and CACNA1B. This is RIMS-binding protein 2 (Rimbp2) from Rattus norvegicus (Rat).